A 180-amino-acid chain; its full sequence is Lipid droplet coating protein Cap20 (180 aa).

The protein belongs to the perilipin family. As to quaternary structure, interacts with class I hydrophobin Hydr1. Interacts also with the cAMP-dependent protein kinase catalytic subunit PkaC1.

It localises to the lipid droplet. Lipid droplet coating protein that regulates lipid metabolism, appressorial turgor pressure, and virulence. Mature appressoria with high turgor pressure are essential to penetrate the leaf surface. This chain is Lipid droplet coating protein Cap20, found in Colletotrichum siamense (Anthracnose fungus).